Consider the following 188-residue polypeptide: Inosine triphosphate pyrophosphatase (188 aa).

Residue Thr-9–Lys-14 participates in ITP binding. Glu-39 contacts Mg(2+). ITP-binding positions include Lys-51, Asp-67–Thr-68, Lys-84, Phe-143–Asp-146, Lys-166, and His-171–Arg-172.

Belongs to the HAM1 NTPase family. In terms of assembly, homodimer. Requires Mg(2+) as cofactor. Mn(2+) is required as a cofactor.

The protein localises to the cytoplasm. It catalyses the reaction ITP + H2O = IMP + diphosphate + H(+). The enzyme catalyses dITP + H2O = dIMP + diphosphate + H(+). It carries out the reaction XTP + H2O = XMP + diphosphate + H(+). In terms of biological role, pyrophosphatase that hydrolyzes non-canonical purine nucleotides such as inosine triphosphate (ITP), deoxyinosine triphosphate (dITP) or xanthosine 5'-triphosphate (XTP) to their respective monophosphate derivatives. The enzyme does not distinguish between the deoxy- and ribose forms. Probably excludes non-canonical purines from RNA and DNA precursor pools, thus preventing their incorporation into RNA and DNA and avoiding chromosomal lesions. This Aedes aegypti (Yellowfever mosquito) protein is Inosine triphosphate pyrophosphatase.